The chain runs to 213 residues: High frequency lysogenization protein HflD homolog (213 aa).

It belongs to the HflD family.

The protein localises to the cytoplasm. Its subcellular location is the cell inner membrane. The polypeptide is High frequency lysogenization protein HflD homolog (Nitrosococcus oceani (strain ATCC 19707 / BCRC 17464 / JCM 30415 / NCIMB 11848 / C-107)).